The following is a 737-amino-acid chain: Protein kinase C epsilon type (737 aa).

Residues 1–117 (MVVFNGLLKI…NGSRHFEDWI (117 aa)) form the C2 domain. Serine 62 carries the post-translational modification Phosphoserine. The Phorbol-ester/DAG-type 1 zinc-finger motif lies at 169–220 (GHKFMATYLRQPTYCSHCRDFIWGVIGKQGYQCQVCTCVVHKRCHELIITKC). The Interaction with actin motif lies at 223 to 228 (LKKQET). Position 228 is a phosphothreonine (threonine 228). Serine 234 is subject to Phosphoserine. A Phorbol-ester/DAG-type 2 zinc finger spans residues 242-292 (PHKFGIHNYKVPTFCDHCGSLLWGLLRQGLQCKVCKMNVHRRCETNVAPNC). Phosphothreonine is present on threonine 309. The segment at 310 to 356 (PDKITNSGQRRKKLAAGAESPQPASGNSPSEDDRSKSAPTSPCDQEL) is disordered. Phosphoserine occurs at positions 316, 329, 337, and 346. Threonine 349 is modified (phosphothreonine). Serine 350 carries the phosphoserine; by MAPK11 and MAPK14 modification. 2 positions are modified to phosphoserine: serine 368 and serine 388. A disordered region spans residues 369–398 (FDNRGEEHRASSSTDGQLASPGENGEVRQG). The Protein kinase domain maps to 408–668 (FNFIKVLGKG…EDAIKQHPFF (261 aa)). ATP is bound by residues 414–422 (LGKGSFGKV) and lysine 437. Residue aspartate 532 is the Proton acceptor of the active site. Threonine 566 carries the post-translational modification Phosphothreonine; by PDPK1. The region spanning 669 to 737 (KEIDWVLLEQ…FSYFGEDLMP (69 aa)) is the AGC-kinase C-terminal domain. Threonine 703 and threonine 710 each carry phosphothreonine. The residue at position 729 (serine 729) is a Phosphoserine.

Belongs to the protein kinase superfamily. AGC Ser/Thr protein kinase family. PKC subfamily. As to quaternary structure, forms a ternary complex with TRIM63 and RACK1/GN2BL1. Can form a complex with PDLIM5 and N-type calcium channel. Interacts with COPB1. Interacts with DGKQ. Interacts with STAT3. Interacts with YWHAB. Interacts with HSP90AB1; promotes functional activation in a heat shock-dependent manner. Interacts (via phorbol-ester/DAG-type 2 domain) with PRPH and VIM. Interacts with NLRP5/MATER. Post-translationally, phosphorylation on Thr-566 by PDPK1 triggers autophosphorylation on Ser-729. Phosphorylation in the hinge domain at Ser-350 by MAPK11 or MAPK14, Ser-346 by GSK3B and Ser-368 by autophosphorylation is required for interaction with YWHAB. In response to growth factors, phosphorylated at Thr-703 and Ser-729 by the mTORC2 complex, promoting autophosphorylation and activation of PRKCE.

It is found in the cytoplasm. The protein localises to the cytoskeleton. It localises to the cell membrane. Its subcellular location is the perinuclear region. The protein resides in the nucleus. It catalyses the reaction L-seryl-[protein] + ATP = O-phospho-L-seryl-[protein] + ADP + H(+). The catalysed reaction is L-threonyl-[protein] + ATP = O-phospho-L-threonyl-[protein] + ADP + H(+). With respect to regulation, novel PKCs (PRKCD, PRKCE, PRKCH and PRKCQ) are calcium-insensitive, but activated by diacylglycerol (DAG) and phosphatidylserine. Three specific sites; Thr-566 (activation loop of the kinase domain), Thr-710 (turn motif) and Ser-729 (hydrophobic region), need to be phosphorylated for its full activation. Calcium-independent, phospholipid- and diacylglycerol (DAG)-dependent serine/threonine-protein kinase that plays essential roles in the regulation of multiple cellular processes linked to cytoskeletal proteins, such as cell adhesion, motility, migration and cell cycle, functions in neuron growth and ion channel regulation, and is involved in immune response, cancer cell invasion and regulation of apoptosis. Mediates cell adhesion to the extracellular matrix via integrin-dependent signaling, by mediating angiotensin-2-induced activation of integrin beta-1 (ITGB1) in cardiac fibroblasts. Phosphorylates MARCKS, which phosphorylates and activates PTK2/FAK, leading to the spread of cardiomyocytes. Involved in the control of the directional transport of ITGB1 in mesenchymal cells by phosphorylating vimentin (VIM), an intermediate filament (IF) protein. In epithelial cells, associates with and phosphorylates keratin-8 (KRT8), which induces targeting of desmoplakin at desmosomes and regulates cell-cell contact. Phosphorylates IQGAP1, which binds to CDC42, mediating epithelial cell-cell detachment prior to migration. During cytokinesis, forms a complex with YWHAB, which is crucial for daughter cell separation, and facilitates abscission by a mechanism which may implicate the regulation of RHOA. In cardiac myocytes, regulates myofilament function and excitation coupling at the Z-lines, where it is indirectly associated with F-actin via interaction with COPB1. During endothelin-induced cardiomyocyte hypertrophy, mediates activation of PTK2/FAK, which is critical for cardiomyocyte survival and regulation of sarcomere length. Plays a role in the pathogenesis of dilated cardiomyopathy via persistent phosphorylation of troponin I (TNNI3). Involved in nerve growth factor (NFG)-induced neurite outgrowth and neuron morphological change independently of its kinase activity, by inhibition of RHOA pathway, activation of CDC42 and cytoskeletal rearrangement. May be involved in presynaptic facilitation by mediating phorbol ester-induced synaptic potentiation. Phosphorylates gamma-aminobutyric acid receptor subunit gamma-2 (GABRG2), which reduces the response of GABA receptors to ethanol and benzodiazepines and may mediate acute tolerance to the intoxicating effects of ethanol. Upon PMA treatment, phosphorylates the capsaicin- and heat-activated cation channel TRPV1, which is required for bradykinin-induced sensitization of the heat response in nociceptive neurons. Is able to form a complex with PDLIM5 and N-type calcium channel, and may enhance channel activities and potentiates fast synaptic transmission by phosphorylating the pore-forming alpha subunit CACNA1B (CaV2.2). Downstream of TLR4, plays an important role in the lipopolysaccharide (LPS)-induced immune response by phosphorylating and activating TICAM2/TRAM, which in turn activates the transcription factor IRF3 and subsequent cytokines production. In differentiating erythroid progenitors, is regulated by EPO and controls the protection against the TNFSF10/TRAIL-mediated apoptosis, via BCL2. May be involved in the regulation of the insulin-induced phosphorylation and activation of AKT1. Phosphorylates NLRP5/MATER and may thereby modulate AKT pathway activation in cumulus cells. Phosphorylates and activates LRRK1, which phosphorylates RAB proteins involved in intracellular trafficking. The protein is Protein kinase C epsilon type (Prkce) of Rattus norvegicus (Rat).